We begin with the raw amino-acid sequence, 361 residues long: Ribosomal RNA large subunit methyltransferase M (361 aa).

S-adenosyl-L-methionine contacts are provided by residues serine 187, 220 to 223 (CPGG), aspartate 239, aspartate 259, and aspartate 276. Lysine 305 (proton acceptor) is an active-site residue.

It belongs to the class I-like SAM-binding methyltransferase superfamily. RNA methyltransferase RlmE family. RlmM subfamily. In terms of assembly, monomer.

The protein resides in the cytoplasm. The catalysed reaction is cytidine(2498) in 23S rRNA + S-adenosyl-L-methionine = 2'-O-methylcytidine(2498) in 23S rRNA + S-adenosyl-L-homocysteine + H(+). Catalyzes the 2'-O-methylation at nucleotide C2498 in 23S rRNA. The chain is Ribosomal RNA large subunit methyltransferase M from Shewanella baltica (strain OS185).